The following is a 182-amino-acid chain: Peptidyl-tRNA hydrolase (182 aa).

TRNA is bound at residue Tyr-14. The active-site Proton acceptor is the His-19. Tyr-65, Asn-67, and Asn-113 together coordinate tRNA.

The protein belongs to the PTH family. Monomer.

It localises to the cytoplasm. The enzyme catalyses an N-acyl-L-alpha-aminoacyl-tRNA + H2O = an N-acyl-L-amino acid + a tRNA + H(+). Functionally, hydrolyzes ribosome-free peptidyl-tRNAs (with 1 or more amino acids incorporated), which drop off the ribosome during protein synthesis, or as a result of ribosome stalling. Its function is as follows. Catalyzes the release of premature peptidyl moieties from peptidyl-tRNA molecules trapped in stalled 50S ribosomal subunits, and thus maintains levels of free tRNAs and 50S ribosomes. This is Peptidyl-tRNA hydrolase from Rickettsia peacockii (strain Rustic).